The primary structure comprises 63 residues: MKNTSILFILGLALLLVLAFEVQVGESDGECGGFWWKCGSGKPACCPKYVCSPKWGLCNFPMP.

Positions 1–21 (MKNTSILFILGLALLLVLAFE) are cleaved as a signal peptide. The propeptide occupies 22–29 (VQVGESDG). 3 disulfide bridges follow: Cys31-Cys46, Cys38-Cys51, and Cys45-Cys58.

It belongs to the neurotoxin 10 (Hwtx-1) family. 44 (Jztx-4) subfamily. Expressed by the venom gland.

The protein resides in the secreted. Its function is as follows. Gating modifier of Kv2.1/KCNB1, Kv2.2/KCNB2 and Kv4.3/KCND3 channels. This chain is Kappa-theraphotoxin-Cg3a 1, found in Chilobrachys guangxiensis (Chinese earth tiger tarantula).